The following is a 535-amino-acid chain: Alcohol O-acetyltransferase 2 (535 aa).

The tract at residues Gly19 to Arg36 is membrane association. Active-site charge relay system residues include His189 and Asp193. Positions Arg515–Phe532 are membrane association.

It belongs to the ATF1 alcohol acetyltransferase family.

It localises to the lipid droplet. The protein resides in the endoplasmic reticulum membrane. The catalysed reaction is an aliphatic alcohol + acetyl-CoA = an acetyl ester + CoA. Functionally, can use acetyl-CoA to synthesize acetate esters from various alcohols, producing ethyl acetate, isoamyl acetate, isobutyl acetate, butyl acetate, hexyl acetate, heptyl acetate and octyl acetate. ATF2 seems to play only a minor role in the acetate ester synthesis, compared to ATF1. Plays an active role in the detoxification hydroxysteroids and possibly certain phytochemicals, in association with the efflux pumps PDR5 and SNQ2. This Saccharomyces cerevisiae (strain ATCC 204508 / S288c) (Baker's yeast) protein is Alcohol O-acetyltransferase 2.